The sequence spans 83 residues: Short neurotoxin NCA-02/NCA-05/UER-05 (83 aa).

Residues Met-1–Thr-21 form the signal peptide. 4 disulfide bridges follow: Cys-24-Cys-45, Cys-38-Cys-62, Cys-64-Cys-75, and Cys-76-Cys-81.

It belongs to the three-finger toxin family. Short-chain subfamily. Type I alpha-neurotoxin sub-subfamily. Expressed by the venom gland.

It localises to the secreted. Binds to muscle nicotinic acetylcholine receptor (nAChR) and inhibit acetylcholine from binding to the receptor, thereby impairing neuromuscular transmission. In Laticauda colubrina (Yellow-lipped sea krait), this protein is Short neurotoxin NCA-02/NCA-05/UER-05.